The chain runs to 440 residues: Xaa-Pro dipeptidase (440 aa).

Mn(2+) is bound by residues D244, D255, H335, E380, and E419.

The protein belongs to the peptidase M24B family. Bacterial-type prolidase subfamily. It depends on Mn(2+) as a cofactor.

The catalysed reaction is Xaa-L-Pro dipeptide + H2O = an L-alpha-amino acid + L-proline. Splits dipeptides with a prolyl residue in the C-terminal position. This chain is Xaa-Pro dipeptidase, found in Shewanella baltica (strain OS223).